The following is a 186-amino-acid chain: Holliday junction branch migration complex subunit RuvA (186 aa).

Residues M1–N61 form a domain I region. The interval D62 to K134 is domain II. A flexible linker region spans residues K134–I135. Residues I136–I186 form a domain III region.

This sequence belongs to the RuvA family. Homotetramer. Forms an RuvA(8)-RuvB(12)-Holliday junction (HJ) complex. HJ DNA is sandwiched between 2 RuvA tetramers; dsDNA enters through RuvA and exits via RuvB. An RuvB hexamer assembles on each DNA strand where it exits the tetramer. Each RuvB hexamer is contacted by two RuvA subunits (via domain III) on 2 adjacent RuvB subunits; this complex drives branch migration. In the full resolvosome a probable DNA-RuvA(4)-RuvB(12)-RuvC(2) complex forms which resolves the HJ.

The protein localises to the cytoplasm. Its function is as follows. The RuvA-RuvB-RuvC complex processes Holliday junction (HJ) DNA during genetic recombination and DNA repair, while the RuvA-RuvB complex plays an important role in the rescue of blocked DNA replication forks via replication fork reversal (RFR). RuvA specifically binds to HJ cruciform DNA, conferring on it an open structure. The RuvB hexamer acts as an ATP-dependent pump, pulling dsDNA into and through the RuvAB complex. HJ branch migration allows RuvC to scan DNA until it finds its consensus sequence, where it cleaves and resolves the cruciform DNA. This Phytoplasma mali (strain AT) protein is Holliday junction branch migration complex subunit RuvA.